We begin with the raw amino-acid sequence, 1692 residues long: Cullin-7 (1692 aa).

The region spanning 348–421 (RTAFASVNTY…HWHMLEILGF (74 aa)) is the CPH domain. In terms of domain architecture, DOC spans 791–970 (PIQIPFFDVF…HTRLFYMVRA (180 aa)). Positions 1319–1335 (VAHEDSGKEHKSKKEDA) are enriched in basic and acidic residues. The disordered stretch occupies residues 1319 to 1374 (VAHEDSGKEHKSKKEDAAGETAAVAMADEEEEEGKKEEGEEEEGEGEEELEEEEER). The segment covering 1357–1374 (GEEEEGEGEEELEEEEER) has biased composition (acidic residues). K1570 participates in a covalent cross-link: Glycyl lysine isopeptide (Lys-Gly) (interchain with G-Cter in NEDD8).

This sequence belongs to the cullin family. In terms of assembly, component of the 3M complex, composed of core components CUL7, CCDC8 and OBSL1. Component of the Cul7-RING(FBXW8) complex consisting of CUL7, RBX1, SKP1 and FBXW8. Within the Cul7-RING(FBXW8) complex interacts with FBXW8 and RBX1, but not with SKP1. Interacts with CUL1 (via the C-terminal domain); the interaction seems to be mediated by FBXW8; it is likely specific to FBXW8, but not other F-box proteins. Interacts (via the CPH domain) with p53/TP53; the interaction preferentially involves tetrameric and dimeric p53/TP53; this interaction recruits p53/TP53 for ubiquitination by neddylated CUL1-RBX1. The CUL7-CUL9 heterodimer seems to interact specifically with p53/TP53. Interacts with FBXW8; interaction is mutually exclusive of binding to CUL9 or p53/TP53. Interacts with CUL9; leading to inhibited CUL9 activity. Interacts with OBSL1. Interacts (as part of the 3M complex) with HDAC4 and HDAC5; it is negatively regulated by ANKRA2.

The protein localises to the cytoplasm. The protein resides in the cytoskeleton. It localises to the microtubule organizing center. It is found in the centrosome. Its subcellular location is the perinuclear region. The protein localises to the golgi apparatus. The protein operates within protein modification; protein ubiquitination. In terms of biological role, core component of the 3M and Cul7-RING(FBXW8) complexes, which mediate the ubiquitination and subsequent proteasomal degradation of target proteins. Core component of the 3M complex, a complex required to regulate microtubule dynamics and genome integrity. It is unclear how the 3M complex regulates microtubules, it could act by controlling the level of a microtubule stabilizer. The Cul7-RING(FBXW8) complex alone lacks ubiquitination activity and does not promote polyubiquitination and proteasomal degradation of p53/TP53. However it mediates recruitment of p53/TP53 for ubiquitination by neddylated CUL1-RBX1. Interaction with CUL9 is required to inhibit CUL9 activity and ubiquitination of BIRC5. The Cul7-RING(FBXW8) complex also mediates ubiquitination and consequent degradation of target proteins such as GORASP1, IRS1 and MAP4K1/HPK1. Ubiquitination of GORASP1 regulates Golgi morphogenesis and dendrite patterning in brain. Mediates ubiquitination and degradation of IRS1 in a mTOR-dependent manner: the Cul7-RING(FBXW8) complex recognizes and binds IRS1 previously phosphorylated by S6 kinase (RPS6KB1 or RPS6KB2). The Cul7-RING(FBXW8) complex also mediates ubiquitination of MAP4K1/HPK1: recognizes and binds autophosphorylated MAP4K1/HPK1, leading to its degradation, thereby affecting cell proliferation and differentiation. Acts as a regulator in trophoblast cell epithelial-mesenchymal transition and placental development. While the Cul7-RING(FBXW8) and the 3M complexes are associated and involved in common processes, CUL7 and the Cul7-RING(FBXW8) complex may have additional functions. Probably plays a role in the degradation of proteins involved in endothelial proliferation and/or differentiation. The protein is Cullin-7 (Cul7) of Rattus norvegicus (Rat).